The following is a 302-amino-acid chain: Heme A synthase (302 aa).

Over 1 to 8 (MFRKQNLK) the chain is Cytoplasmic. A helical transmembrane segment spans residues 9–29 (WLGVLATIIMTFVQLGGALVT). The Extracellular portion of the chain corresponds to 30-67 (KTGSEDGCGSSWPLCNGALLPENLPIQTIIELSHRAVS). Cys37 and Cys44 are joined by a disulfide. The active site involves Glu60. His63 provides a ligand contact to heme o. The chain crosses the membrane as a helical span at residues 68–88 (AISLIVVLWLVITAWKNIGYI). The Cytoplasmic portion of the chain corresponds to 89–93 (KEIKP). A helical membrane pass occupies residues 94–114 (LSIISVGFLLVQALVGAAAVI). The Extracellular segment spans residues 115–125 (WQQNPYVLALH). His125 provides a ligand contact to heme o. Residues 126–146 (FGISLISFSSVFLMTLIIFSI) form a helical membrane-spanning segment. Residues 147–161 (DKKYEADILFIHKPL) lie on the Cytoplasmic side of the membrane. Residues 162 to 182 (RILTWLMAIIVYLTIYTGALV) form a helical membrane-spanning segment. Topologically, residues 183–215 (RHTKSSLAYGAWPIPFDDIVPHNAHDWVQFSHR) are extracellular. A heme b-binding site is contributed by His214. Residues 216–236 (GMALITFIWIMITFIHAIKNY) form a helical membrane-spanning segment. Over 237 to 244 (SDNRTVRY) the chain is Cytoplasmic. A helical membrane pass occupies residues 245–265 (GYTASFILVILQVITGALSVI). Topologically, residues 266–270 (TNVNL) are extracellular. The chain crosses the membrane as a helical span at residues 271–291 (IIALFHALFITYLFGMIAYFI). Heme b is bound at residue His276. Residues 292–302 (LLMLRTTRSQK) lie on the Cytoplasmic side of the membrane.

The protein belongs to the COX15/CtaA family. Type 1 subfamily. Interacts with CtaB. The cofactor is heme b.

It localises to the cell membrane. The enzyme catalyses Fe(II)-heme o + 2 A + H2O = Fe(II)-heme a + 2 AH2. The protein operates within porphyrin-containing compound metabolism; heme A biosynthesis; heme A from heme O: step 1/1. Functionally, catalyzes the conversion of heme O to heme A by two successive hydroxylations of the methyl group at C8. The first hydroxylation forms heme I, the second hydroxylation results in an unstable dihydroxymethyl group, which spontaneously dehydrates, resulting in the formyl group of heme A. The polypeptide is Heme A synthase (Staphylococcus epidermidis (strain ATCC 35984 / DSM 28319 / BCRC 17069 / CCUG 31568 / BM 3577 / RP62A)).